Consider the following 97-residue polypeptide: Large ribosomal subunit protein bL27 (97 aa).

A propeptide spanning residues 1–12 is cleaved from the precursor; that stretch reads MIKLNLSNLQHF. Positions 13 to 38 are disordered; sequence AHKKGGGSTSNGRDSQAKRLGAKAAD.

It belongs to the bacterial ribosomal protein bL27 family. In terms of processing, the N-terminus is cleaved by ribosomal processing cysteine protease Prp.

The sequence is that of Large ribosomal subunit protein bL27 from Streptococcus equi subsp. equi (strain 4047).